A 146-amino-acid chain; its full sequence is Minor capsid protein P5 (146 aa).

In terms of assembly, interacts with the major capsid protein.

Its subcellular location is the virion. In terms of biological role, one of the minor capsid proteins that constitute a network internal to the major capsid proteins and outside the lipid membrane. The minor capsid proteins glue and stabilize the capsomers. The sequence is that of Minor capsid protein P5 from Paramecium bursaria Chlorella virus 1 (PBCV-1).